The sequence spans 303 residues: 4-diphosphocytidyl-2-C-methyl-D-erythritol kinase (303 aa).

The active site involves lysine 24. 111–121 (PIASGIGGGSA) serves as a coordination point for ATP. Aspartate 153 is an active-site residue.

Belongs to the GHMP kinase family. IspE subfamily.

It catalyses the reaction 4-CDP-2-C-methyl-D-erythritol + ATP = 4-CDP-2-C-methyl-D-erythritol 2-phosphate + ADP + H(+). The protein operates within isoprenoid biosynthesis; isopentenyl diphosphate biosynthesis via DXP pathway; isopentenyl diphosphate from 1-deoxy-D-xylulose 5-phosphate: step 3/6. Catalyzes the phosphorylation of the position 2 hydroxy group of 4-diphosphocytidyl-2C-methyl-D-erythritol. This is 4-diphosphocytidyl-2-C-methyl-D-erythritol kinase from Rhizobium johnstonii (strain DSM 114642 / LMG 32736 / 3841) (Rhizobium leguminosarum bv. viciae).